Reading from the N-terminus, the 391-residue chain is Odorant receptor 67d (391 aa).

Residues 1-45 are Cytoplasmic-facing; the sequence is MLKMAKVEPVERYCKVIRMIRFCVGFCGNDVADPNFRMWWLTYAV. A helical membrane pass occupies residues 46–66; that stretch reads MAAIAFFFACTGYTIYVGVVI. Residues 67–71 lie on the Extracellular side of the membrane; sequence NGDLT. Residues 72–92 traverse the membrane as a helical segment; it reads IILQALAMVGSAVQGLTKLLV. The Cytoplasmic portion of the chain corresponds to 93 to 140; sequence TANNASHMREVQNTYEDIYREYGSKGDEYAKCLEKRIRITWTLLIGFM. The helical transmembrane segment at 141–161 threads the bilayer; sequence LVYIILLGLVITFPIFYLLIL. Topologically, residues 162 to 164 are extracellular; sequence HQK. Residues 165–185 traverse the membrane as a helical segment; that stretch reads VLVMQFLIPFLDHTTDGGHLI. Residues 186–191 lie on the Cytoplasmic side of the membrane; the sequence is LTAAHV. A helical membrane pass occupies residues 192–212; it reads ILITFGGFGNYGGDMYLFLFV. The Extracellular portion of the chain corresponds to 213 to 268; it reads THVPLIKDIFCVKLTEFNELVMKRNDFPKVRAMLCDLLVWHQLYTRMLQTTKKIYS. A helical membrane pass occupies residues 269 to 289; it reads IVLFVQLSTTCVGLLCTISCI. The Cytoplasmic portion of the chain corresponds to 290–297; the sequence is FMKAWPAA. A helical membrane pass occupies residues 298 to 318; sequence PLYLLYAAITLYTFCGLGTLV. The Extracellular portion of the chain corresponds to 319 to 391; it reads ENSNEDFLSV…FSMMLMNYLG (73 aa).

This sequence belongs to the insect chemoreceptor superfamily. Heteromeric odorant receptor channel (TC 1.A.69) family. Or67d subfamily. In terms of assembly, interacts with Orco. Complexes exist early in the endomembrane system in olfactory sensory neurons (OSNs), coupling these complexes to the conserved ciliary trafficking pathway. As to expression, expressed in antenna.

The protein resides in the cell membrane. In terms of biological role, plays a role in detection and sensitivity to pheromones and signal transduction of the fatty-acid-derived male pheromone 11-cis vaccenyl acetate (cVA). Acts in concert with Snmp and lush to capture cVA molecules on the surface of Or67d expressing olfactory dendrites and facilitate their transfer to the odorant-receptor Orco complex. Necessary to mediate behavioral responses to cVA by regulating both male and female mating behavior. Activation of Or67d neurons by cVA inhibits courtship of other males, whereas in females their activation promotes receptivity to other males. May form a complex with Orco to form odorant-sensing units, providing sensitive and prolonged odorant signaling and calcium permeability. This chain is Odorant receptor 67d (Or67d), found in Drosophila melanogaster (Fruit fly).